An 844-amino-acid polypeptide reads, in one-letter code: Protein translocase subunit SecA 1 (844 aa).

ATP-binding positions include Gln91, 109-113 (GEGKT), and Asp498. Over residues 793-813 (KSKSFGEAKHVTAEDGKEKAK) the composition is skewed to basic and acidic residues. The tract at residues 793–825 (KSKSFGEAKHVTAEDGKEKAKPQPIVKGDQVGR) is disordered. Zn(2+) is bound by residues Cys829, Cys831, Cys840, and His841.

Belongs to the SecA family. As to quaternary structure, monomer and homodimer. Part of the essential Sec protein translocation apparatus which comprises SecA, SecYEG and auxiliary proteins SecDF. Other proteins may also be involved. It depends on Zn(2+) as a cofactor.

It localises to the cell membrane. The protein resides in the cytoplasm. The catalysed reaction is ATP + H2O + cellular proteinSide 1 = ADP + phosphate + cellular proteinSide 2.. Its function is as follows. Part of the Sec protein translocase complex. Interacts with the SecYEG preprotein conducting channel. Has a central role in coupling the hydrolysis of ATP to the transfer of proteins into and across the cell membrane, serving as an ATP-driven molecular motor driving the stepwise translocation of polypeptide chains across the membrane. In Staphylococcus epidermidis (strain ATCC 35984 / DSM 28319 / BCRC 17069 / CCUG 31568 / BM 3577 / RP62A), this protein is Protein translocase subunit SecA 1.